The following is a 765-amino-acid chain: Zinc finger and BTB domain-containing protein 49 (765 aa).

A BTB domain is found at 25 to 91 (CDCMLVVKGV…MYTSHLDLNQ (67 aa)). Disordered stretches follow at residues 165 to 203 (QQNK…GSCT) and 275 to 294 (NFLA…DATC). 7 C2H2-type zinc fingers span residues 395 to 417 (YACE…KRSH), 423 to 445 (FECN…LRRH), 451 to 473 (YICE…IIIH), 479 to 501 (HLCD…KKTH), 507 to 529 (FTCD…RIRH), 535 to 557 (YSCS…VRTH), and 563 to 585 (YTCE…KKMH).

It belongs to the krueppel C2H2-type zinc-finger protein family. In terms of assembly, isoform 1 interacts with EP300 and KAT5/Tip60. The interaction with EP300 is direct and leads to synergistic induction of CDKN1A. On the CDKN1A promoter, forms a complex with ZBTB17/Miz-1; this interaction leads to additive CDKN1A transactivation. Isoform 3 also interacts with ZBTB17; this interaction may block ZBTB17 repressor activity. As to expression, highly expressed in normal epidermis and in other epithelial tissues, including in colon and lung. Tends to be down-regulated in colon, lung and skin cancer tissues.

It localises to the cytoplasm. Its subcellular location is the nucleus. In terms of biological role, transcription factor. Inhibits cell proliferation by activating either CDKN1A/p21 transcription or RB1 transcription. Its function is as follows. Binds CDKN1A promoter and activates its transcription; this activity is further potentiated in the presence of EP300 (synergistic) and ZBTB17/Miz-1 (additive). Activates RB1 transcription most probably by antagonizing ZBTB17 repression of RB1. Does not bind directly RB1 promoter. The polypeptide is Zinc finger and BTB domain-containing protein 49 (ZBTB49) (Homo sapiens (Human)).